A 413-amino-acid chain; its full sequence is Tryptophan synthase beta chain 2 (413 aa).

K107 carries the post-translational modification N6-(pyridoxal phosphate)lysine.

This sequence belongs to the TrpB family. As to quaternary structure, tetramer of two alpha and two beta chains. The cofactor is pyridoxal 5'-phosphate.

It carries out the reaction (1S,2R)-1-C-(indol-3-yl)glycerol 3-phosphate + L-serine = D-glyceraldehyde 3-phosphate + L-tryptophan + H2O. Its pathway is amino-acid biosynthesis; L-tryptophan biosynthesis; L-tryptophan from chorismate: step 5/5. In terms of biological role, the beta subunit is responsible for the synthesis of L-tryptophan from indole and L-serine. The sequence is that of Tryptophan synthase beta chain 2 (trpB2) from Nostoc sp. (strain PCC 7120 / SAG 25.82 / UTEX 2576).